The sequence spans 942 residues: Cilia- and flagella-associated protein 69 (942 aa).

Residues 1 to 16 are compositionally biased toward low complexity; sequence MSTAEASATTADAAEA. The disordered stretch occupies residues 1 to 25; the sequence is MSTAEASATTADAAEAGGRTKTGSP.

In terms of tissue distribution, expressed in ciliated olfactory sensory neurons (at protein level). Expressed in testis, specifically in sperm (at protein level).

It is found in the cell projection. Its subcellular location is the cilium. The protein localises to the flagellum. Its function is as follows. Cilium- and flagellum-associated protein. In the olfactory epithelium, regulates the speed of activation and termination of the odor response and thus contributes to the robustness of olfactory transduction pathways. Required for sperm flagellum assembly and stability. The protein is Cilia- and flagella-associated protein 69 of Mus musculus (Mouse).